The following is a 354-amino-acid chain: MPSKNLQQAVLTNEFTTNFITTCKDWLDVNGLAKGNLEKKRDDNEEEERLKTESKLPGHDIHGFDNEIKSLQHFLLDQKVRREFKSLVIVGEYGVGKTALCQKIFNDEAVKSVYAPRVWVSMENKESKEGLDGKICVLKKILKGLGVEELILETISTDAKQEFKDNEEVASNQEAGEIDRETEKEKELSALLYALHLNLRWKKYLIVFDDVRENDNWDEKLDAKLKEDEKWGKYLSDGFPKGSGGRVIYTTRDENLAKNLVAQKHEIHRLWPLSDHQSVWKIYDAVVKDKQKESPRNDKKCIDELMNKSRGLPLAARLLAERDPVFVDDEVGPVGSTHGQTDSSNRQPANQASS.

A coiled-coil region spans residues 33-53 (AKGNLEKKRDDNEEEERLKTE). In terms of domain architecture, NB-ARC spans 45-122 (EEEERLKTES…VYAPRVWVSM (78 aa)). 91–98 (GEYGVGKT) is an ATP binding site. The disordered stretch occupies residues 328–354 (DDEVGPVGSTHGQTDSSNRQPANQASS). Polar residues predominate over residues 337–354 (THGQTDSSNRQPANQASS).

In terms of biological role, possible disease resistance protein. The sequence is that of Probable disease resistance protein At5g45490 from Arabidopsis thaliana (Mouse-ear cress).